The primary structure comprises 348 residues: N-formyl peptide receptor 2 (348 aa).

N-linked (GlcNAc...) asparagine glycosylation is present at Asn1. At 1–24 (NFSTPLNEHEEVSYESAGYTVLQI) the chain is on the extracellular side. A helical membrane pass occupies residues 25 to 47 (LPLVVLGVTFVLGVLGNGLVIWV). Over 48 to 58 (AGFRMTRTVTT) the chain is Cytoplasmic. A helical membrane pass occupies residues 59–80 (ICYLNLPLADFSFTATLPFLIV). Residues 81-97 (SMAMGEKWPFGWFLCKL) are Extracellular-facing. An intrachain disulfide couples Cys95 to Cys173. A helical membrane pass occupies residues 98–118 (IHIVVDINLFGSVFLIGFIAL). The Cytoplasmic segment spans residues 119–137 (DRCICVLHPVWAQNHRTVS). A helical transmembrane segment spans residues 138-159 (LAMKVIIGPWILALVLTLPVFL). At 160–202 (FLTTVTIPNGDTYCTFNFASWGGTPEERKNVAITMLTARGIIR) the chain is on the extracellular side. A helical membrane pass occupies residues 203–223 (FVIGFSMPMSIVAICYGLIAA). Topologically, residues 224 to 239 (KIHKKGMIKSSRPLRV) are cytoplasmic. The chain crosses the membrane as a helical span at residues 240-263 (LTAVVASFFICWFPFQLVALLSTV). At 264-283 (WLKEMLFYGKYKIINILVNP) the chain is on the extracellular side. The helical transmembrane segment at 284-303 (TSSLAFFNSCLNPMLYVFVG) threads the bilayer. Residues 304 to 348 (QDFRERLIRSLPTSLERALSEDSAPTNDTAAKCASPPAETELQAM) are Cytoplasmic-facing. Residues 323 to 348 (SEDSAPTNDTAAKCASPPAETELQAM) form a disordered region.

The protein belongs to the G-protein coupled receptor 1 family. In terms of assembly, interacts with APP; the interaction takes place at the cell surface and the complex is then rapidly internalized.

It localises to the cell membrane. Low affinity receptor for N-formyl-methionyl peptides, which are powerful neutrophil chemotactic factors. Binding of FMLP to the receptor causes activation of neutrophils. This response is mediated via a G-protein that activates a phosphatidylinositol-calcium second messenger system. Receptor for the chemokine-like protein FAM19A5, mediating FAM19A5-stimulated macrophage chemotaxis and the inhibitory effect on TNFSF11/RANKL-induced osteoclast differentiation. In Pongo pygmaeus (Bornean orangutan), this protein is N-formyl peptide receptor 2 (FPR2).